The chain runs to 397 residues: Carbamoyl phosphate synthase small chain (397 aa).

Residues 1–204 (MSPLLPSFPF…PAYRTLDTSK (204 aa)) form a CPSase region. L-glutamine contacts are provided by Ser-53, Gly-256, and Gly-258. The Glutamine amidotransferase type-1 domain maps to 208–395 (KVVAYDFGVK…MELMNAAKKE (188 aa)). Cys-284 serves as the catalytic Nucleophile. L-glutamine contacts are provided by Leu-285, Gln-288, Asn-326, Gly-328, and Phe-329. Active-site residues include His-368 and Glu-370.

The protein belongs to the CarA family. In terms of assembly, composed of two chains; the small (or glutamine) chain promotes the hydrolysis of glutamine to ammonia, which is used by the large (or ammonia) chain to synthesize carbamoyl phosphate. Tetramer of heterodimers (alpha,beta)4.

It catalyses the reaction hydrogencarbonate + L-glutamine + 2 ATP + H2O = carbamoyl phosphate + L-glutamate + 2 ADP + phosphate + 2 H(+). It carries out the reaction L-glutamine + H2O = L-glutamate + NH4(+). Its pathway is amino-acid biosynthesis; L-arginine biosynthesis; carbamoyl phosphate from bicarbonate: step 1/1. It functions in the pathway pyrimidine metabolism; UMP biosynthesis via de novo pathway; (S)-dihydroorotate from bicarbonate: step 1/3. Functionally, small subunit of the glutamine-dependent carbamoyl phosphate synthetase (CPSase). CPSase catalyzes the formation of carbamoyl phosphate from the ammonia moiety of glutamine, carbonate, and phosphate donated by ATP, constituting the first step of 2 biosynthetic pathways, one leading to arginine and/or urea and the other to pyrimidine nucleotides. The small subunit (glutamine amidotransferase) binds and cleaves glutamine to supply the large subunit with the substrate ammonia. In Polynucleobacter asymbioticus (strain DSM 18221 / CIP 109841 / QLW-P1DMWA-1) (Polynucleobacter necessarius subsp. asymbioticus), this protein is Carbamoyl phosphate synthase small chain.